The following is a 171-amino-acid chain: Minor capsid protein 3 (171 aa).

Interacts with the major capsid protein.

The protein localises to the virion. One of the minor capsid proteins that constitute a network internal to the major capsid proteins and outside the lipid membrane. The minor capsid proteins glue and stabilize the capsomers. The sequence is that of Minor capsid protein 3 from Chlorella (PBCV-1).